The chain runs to 133 residues: Fluoride-specific ion channel FluC (133 aa).

The next 4 membrane-spanning stretches (helical) occupy residues 3–23, 41–61, 76–96, and 103–123; these read AVVWWQSLLLVMLGGAFGSGL, WGTLAVNLIGSFVAGFLLIWV, IVGLIGGLTTFSSLMVECLVF, and LIVGFYLCITLLFGLLFVFLG. 2 residues coordinate Na(+): Gly81 and Thr84.

Belongs to the fluoride channel Fluc/FEX (TC 1.A.43) family.

It is found in the cell inner membrane. It carries out the reaction fluoride(in) = fluoride(out). With respect to regulation, na(+) is not transported, but it plays an essential structural role and its presence is essential for fluoride channel function. Fluoride-specific ion channel. Important for reducing fluoride concentration in the cell, thus reducing its toxicity. The protein is Fluoride-specific ion channel FluC of Xylella fastidiosa (strain M23).